A 223-amino-acid chain; its full sequence is Homeobox protein egl-5 (223 aa).

The segment covering 1–25 has biased composition (low complexity); the sequence is MNTSTSAFDFGSSTASSAATSTTSS. 2 disordered regions span residues 1 to 58 and 168 to 191; these read MNTS…STEA and KKEK…PPKG. The homeobox DNA-binding region spans 112–171; it reads SKKGRQTYQRYQTSVLEAKFQQSSYVSKKQREELRLQTQLTDRQIKIWFQNRRMKAKKEK.

It belongs to the Abd-B homeobox family. In terms of assembly, interacts with the TCF transcription factor pop-1.

It localises to the nucleus. Functionally, involved in control of cell fate and pattern formation along the anterior-posterior axis, acting mainly in the tail. Required during embryonic and postembryonic development. Essential for the determination of specific neurons, including the PLM touch neurons. Plays a role in neural fate specification in the hermaphrodite-specific neuron (HSN)/PHB neuron lineage, acting in concert with T-box protein tbx-2 and the asymmetric cell division protein ham-1. Required for male gonadal fate determination, acting in parallel with a WNT/beta-catenin pathway, perhaps by recruiting pop-1 to male-specific gonadal target genes. Involved in development of the hermaphrodite hindgut, and for the response to rectal infection by the coryneform bacterium M.nematophilum. The protein is Homeobox protein egl-5 of Caenorhabditis elegans.